Reading from the N-terminus, the 298-residue chain is Ribosomal RNA small subunit methyltransferase H (298 aa).

S-adenosyl-L-methionine-binding positions include Gly-37–His-39, Asp-57, Leu-91, Asp-105, and Gln-112.

The protein belongs to the methyltransferase superfamily. RsmH family.

It is found in the cytoplasm. It carries out the reaction cytidine(1402) in 16S rRNA + S-adenosyl-L-methionine = N(4)-methylcytidine(1402) in 16S rRNA + S-adenosyl-L-homocysteine + H(+). Specifically methylates the N4 position of cytidine in position 1402 (C1402) of 16S rRNA. The polypeptide is Ribosomal RNA small subunit methyltransferase H (Kosmotoga olearia (strain ATCC BAA-1733 / DSM 21960 / TBF 19.5.1)).